A 431-amino-acid chain; its full sequence is MALQRPKGTQDHLPDGSPKLSRDVQASAFAYVQDTARRVLERAGAQFIATPLFEEAELVRRGVGGSTDIVRKEMFTVYYFGDHGGYVLRPEGTAGIVRAYLQNGLKQLPAPLKLWTHGPMFRAENVQKGRLRQFHQVDYEALGSADPLVDAEAIWLMWEVVRELGLTGVRVKLGSIGDPADREAYNAYLRDCFTPHAARLSDDSRDRLTRNPMRILDSKSTGDQALIGELQVKPMLDFLGEAASSHFAAVQAYLRAWNVPFDIDPAIVRGLDYYRRTAWELHHQGVGAKSALGGGGRYDGLSTQLGGPEVPGIGWAFGIERLLLALEAEGVTFPEESGPLLFLAALDEEHVARAAGLALEGRRVARVEFAYRALKPANAFKEADRRRARYAGLLGSDEAERGVLTIKHLASGEQQEVPLAALNTFLAERAR.

Positions 1–20 (MALQRPKGTQDHLPDGSPKL) are disordered.

Belongs to the class-II aminoacyl-tRNA synthetase family. Homodimer.

The protein localises to the cytoplasm. It carries out the reaction tRNA(His) + L-histidine + ATP = L-histidyl-tRNA(His) + AMP + diphosphate + H(+). The chain is Histidine--tRNA ligase from Deinococcus geothermalis (strain DSM 11300 / CIP 105573 / AG-3a).